Consider the following 91-residue polypeptide: Putative defective replication initiation protein (91 aa).

The polypeptide is Putative defective replication initiation protein (repA1) (Escherichia coli (strain K12)).